The chain runs to 211 residues: ATP phosphoribosyltransferase (211 aa).

This sequence belongs to the ATP phosphoribosyltransferase family. Short subfamily. In terms of assembly, heteromultimer composed of HisG and HisZ subunits.

It localises to the cytoplasm. It catalyses the reaction 1-(5-phospho-beta-D-ribosyl)-ATP + diphosphate = 5-phospho-alpha-D-ribose 1-diphosphate + ATP. Its pathway is amino-acid biosynthesis; L-histidine biosynthesis; L-histidine from 5-phospho-alpha-D-ribose 1-diphosphate: step 1/9. Catalyzes the condensation of ATP and 5-phosphoribose 1-diphosphate to form N'-(5'-phosphoribosyl)-ATP (PR-ATP). Has a crucial role in the pathway because the rate of histidine biosynthesis seems to be controlled primarily by regulation of HisG enzymatic activity. This is ATP phosphoribosyltransferase from Lacticaseibacillus paracasei (strain ATCC 334 / BCRC 17002 / CCUG 31169 / CIP 107868 / KCTC 3260 / NRRL B-441) (Lactobacillus paracasei).